A 554-amino-acid chain; its full sequence is Glutamine--tRNA ligase (554 aa).

The short motif at 34 to 44 is the 'HIGH' region element; sequence PEPNGYLHIGH. ATP is bound by residues 35–37 and 41–47; these read EPN and HIGHAKS. Positions 67 and 212 each coordinate L-glutamine. ATP contacts are provided by residues threonine 231, 261–262, and 269–271; these read RL and MSK. The short motif at 268-272 is the 'KMSKS' region element; that stretch reads IMSKR.

Belongs to the class-I aminoacyl-tRNA synthetase family. In terms of assembly, monomer.

The protein resides in the cytoplasm. It carries out the reaction tRNA(Gln) + L-glutamine + ATP = L-glutaminyl-tRNA(Gln) + AMP + diphosphate. The chain is Glutamine--tRNA ligase from Serratia proteamaculans (strain 568).